The sequence spans 259 residues: Snake venom serine proteinase 2 (259 aa).

Positions 1–18 (MVLIRVLANLLILQLSYA) are cleaved as a signal peptide. The propeptide occupies 19–24 (QKSSEL). Residues 25-250 (IFGGRPCNRN…HLDWIQSIIA (226 aa)) enclose the Peptidase S1 domain. 6 disulfide bridges follow: cysteine 31–cysteine 162, cysteine 49–cysteine 65, cysteine 97–cysteine 257, cysteine 141–cysteine 211, cysteine 173–cysteine 190, and cysteine 201–cysteine 226. Catalysis depends on charge relay system residues histidine 64 and aspartate 109. The active-site Charge relay system is the serine 205.

It belongs to the peptidase S1 family. Snake venom subfamily. In terms of assembly, monomer. Expressed by the venom gland.

Its subcellular location is the secreted. In terms of biological role, snake venom serine protease that may act in the hemostasis system of the prey. This is Snake venom serine proteinase 2 from Crotalus adamanteus (Eastern diamondback rattlesnake).